We begin with the raw amino-acid sequence, 308 residues long: Dual oxidase maturation factor 1 (308 aa).

The Extracellular portion of the chain corresponds to 1-21 (MQANIFPFYPQPRTSFKFDTK). A helical transmembrane segment spans residues 22 to 42 (IIEIIIICIVTACTFIIILPG). Topologically, residues 43–49 (IRGKSRS) are cytoplasmic. The chain crosses the membrane as a helical span at residues 50 to 70 (IWLFRILTSLFIGAVILAVNF). Topologically, residues 71-172 (TSDWETGIVT…SPCGLFQQYC (102 aa)) are extracellular. Residues Asn-94, Asn-107, and Asn-119 are each glycosylated (N-linked (GlcNAc...) asparagine). Residues 173-195 (ISTYYSSEIMWVAFGSWILYNVL) form a helical membrane-spanning segment. The Cytoplasmic portion of the chain corresponds to 196–199 (FSMP). Residues 200–220 (VILYGICMMFVTAICMLVSLI) traverse the membrane as a helical segment. Residues 221–247 (SFASVRQAPVCNIHFGNAVLKTHFGVS) lie on the Extracellular side of the membrane. A helical membrane pass occupies residues 248-268 (YWLSLVTGLFCLIVSLVLLFL). Residues 269–308 (YKTQPKVIRLIFSYGEEEDLSDKSENEEEHSSALSLNEML) are Cytoplasmic-facing.

This sequence belongs to the DUOXA family.

It localises to the membrane. In terms of biological role, possible role in maturation and transport from the endoplasmic reticulum to the plasma membrane of functional dual oxidase. In Xenopus tropicalis (Western clawed frog), this protein is Dual oxidase maturation factor 1 (duoxa1).